A 98-amino-acid chain; its full sequence is Major carboxysome shell protein CsoS1A (98 aa).

The BMC domain maps to 8–93 (ALGMIETRGL…VHSEVENILP (86 aa)).

Belongs to the bacterial microcompartments protein family. CsoS1 subfamily. Homohexamer with a small central pore; the concave side is mostly positive electrostatic potential, whereas the convex side is mostly negative electrostatic potential. Forms a CsoS2-CsoS1-RuBisCO complex. Interacts with the N-terminus (residues 1-136) of RuBisCO (CbbL).

It localises to the carboxysome. Its function is as follows. The major shell protein of the carboxysome, a polyhedral inclusion where RuBisCO (ribulose bisphosphate carboxylase, ccbL-ccbS) is sequestered. Assembles into hexamers which make sheets that form the facets of the polyhedral carboxysome. The shell probably limits the diffusion of CO(2) into and out of the carboxysome. Molecular modeling shows the central pore of this protein is selectively permeable to anions such as HCO(3) rather than CO(2) or O(2). There are estimated to be 2970 CsoS1A/CsoS1C proteins per carboxysome (the proteins differ by only 1 residue). In terms of biological role, unlike beta-carboxysomes, alpha-carboxysomes (Cb) can form without cargo protein. CsoS2 is essential for Cb formation and is also capable of targeting foreign proteins to the Cb. The Cb shell assembles with the aid of CsoS2; CsoS1A, CsoS1B and CsoS1C form the majority of the shell while CsoS4A and CsoS4B form vertices. CsoS1D forms pseudohexamers that probably control metabolite flux into and out of the shell. This is Major carboxysome shell protein CsoS1A from Halothiobacillus neapolitanus (strain ATCC 23641 / c2) (Thiobacillus neapolitanus).